A 378-amino-acid polypeptide reads, in one-letter code: Dual-specificity RNA methyltransferase RlmN (378 aa).

Glu97 acts as the Proton acceptor in catalysis. One can recognise a Radical SAM core domain in the interval 103 to 341; sequence EGDRATLCVS…VMVRKTRGDD (239 aa). A disulfide bond links Cys110 and Cys346. [4Fe-4S] cluster contacts are provided by Cys117, Cys121, and Cys124. S-adenosyl-L-methionine contacts are provided by residues 171-172, Ser203, 225-227, and Asn303; these read GE and SLH. Cys346 functions as the S-methylcysteine intermediate in the catalytic mechanism.

The protein belongs to the radical SAM superfamily. RlmN family. It depends on [4Fe-4S] cluster as a cofactor.

Its subcellular location is the cytoplasm. It catalyses the reaction adenosine(2503) in 23S rRNA + 2 reduced [2Fe-2S]-[ferredoxin] + 2 S-adenosyl-L-methionine = 2-methyladenosine(2503) in 23S rRNA + 5'-deoxyadenosine + L-methionine + 2 oxidized [2Fe-2S]-[ferredoxin] + S-adenosyl-L-homocysteine. The catalysed reaction is adenosine(37) in tRNA + 2 reduced [2Fe-2S]-[ferredoxin] + 2 S-adenosyl-L-methionine = 2-methyladenosine(37) in tRNA + 5'-deoxyadenosine + L-methionine + 2 oxidized [2Fe-2S]-[ferredoxin] + S-adenosyl-L-homocysteine. In terms of biological role, specifically methylates position 2 of adenine 2503 in 23S rRNA and position 2 of adenine 37 in tRNAs. m2A2503 modification seems to play a crucial role in the proofreading step occurring at the peptidyl transferase center and thus would serve to optimize ribosomal fidelity. The sequence is that of Dual-specificity RNA methyltransferase RlmN from Idiomarina loihiensis (strain ATCC BAA-735 / DSM 15497 / L2-TR).